Consider the following 311-residue polypeptide: Malate dehydrogenase (311 aa).

NAD(+) contacts are provided by residues 7–13 (GAAGGIG) and Asp-34. Substrate-binding residues include Arg-81 and Arg-87. NAD(+)-binding positions include Asn-94 and 117-119 (ITN). Substrate is bound by residues Asn-119 and Arg-153. His-177 functions as the Proton acceptor in the catalytic mechanism. NAD(+) is bound at residue Met-227.

It belongs to the LDH/MDH superfamily. MDH type 1 family. As to quaternary structure, homodimer.

The catalysed reaction is (S)-malate + NAD(+) = oxaloacetate + NADH + H(+). In terms of biological role, catalyzes the reversible oxidation of malate to oxaloacetate. In Shewanella halifaxensis (strain HAW-EB4), this protein is Malate dehydrogenase.